The following is a 332-amino-acid chain: Cytochrome c1, heme protein, mitochondrial (332 aa).

Residues 1–70 (MLARTCLRST…YYHLYGFASA (70 aa)) constitute a mitochondrion transit peptide. Residues 71 to 277 (MTPAEEGLHA…AEPEMDDRKR (207 aa)) lie on the Mitochondrial intermembrane side of the membrane. In terms of domain architecture, Cytochrome c spans 97 to 250 (QALRRGFQVY…GLVDYEDGTP (154 aa)). 3 residues coordinate heme c: Cys-110, Cys-113, and His-114. Acidic residues predominate over residues 139–151 (EENEYDTEPNDQG). Positions 139 to 162 (EENEYDTEPNDQGEIEKRPGKLSD) are disordered. Met-234 contributes to the heme c binding site. Residues 278–296 (MGMKVLVVTSVLFALSVYV) form a helical membrane-spanning segment. The Mitochondrial matrix segment spans residues 297–332 (KRYKWAWLKSRKIVYDPPKSPPPATNLALPQQRAKS).

It belongs to the cytochrome c family. As to quaternary structure, component of the ubiquinol-cytochrome c oxidoreductase (cytochrome b-c1 complex, complex III, CIII), a multisubunit enzyme composed of 10 subunits. The complex is composed of 3 respiratory subunits cytochrome b (cob), cytochrome c1 (cyt-1) and Rieske protein (fes-1), 2 core protein subunits pep and ucr-1, and 5 low-molecular weight protein subunits qcr6, qcr7, qcr8, qcr9 and probably NCU16844/qcr10. The complex exists as an obligatory dimer and forms supercomplexes (SCs) in the inner mitochondrial membrane with NADH-ubiquinone oxidoreductase (complex I, CI) and cytochrome c oxidase (complex IV, CIV), resulting in different assemblies (supercomplexes SCI(1)III(2), SCIII(2)IV(1) and SCIII(2)IV(2) as well as higher order I(x)III(y)IV(z) megacomplexes). Heme c serves as cofactor.

It is found in the mitochondrion inner membrane. It catalyses the reaction a quinol + 2 Fe(III)-[cytochrome c](out) = a quinone + 2 Fe(II)-[cytochrome c](out) + 2 H(+)(out). In terms of biological role, component of the ubiquinol-cytochrome c oxidoreductase, a multisubunit transmembrane complex that is part of the mitochondrial electron transport chain which drives oxidative phosphorylation. The respiratory chain contains 3 multisubunit complexes succinate dehydrogenase (complex II, CII), ubiquinol-cytochrome c oxidoreductase (cytochrome b-c1 complex, complex III, CIII) and cytochrome c oxidase (complex IV, CIV), that cooperate to transfer electrons derived from NADH and succinate to molecular oxygen, creating an electrochemical gradient over the inner membrane that drives transmembrane transport and the ATP synthase. The cytochrome b-c1 complex catalyzes electron transfer from ubiquinol to cytochrome c, linking this redox reaction to translocation of protons across the mitochondrial inner membrane, with protons being carried across the membrane as hydrogens on the quinol. In the process called Q cycle, 2 protons are consumed from the matrix, 4 protons are released into the intermembrane space and 2 electrons are passed to cytochrome c. Cytochrome c1 is a catalytic core subunit containing a c-type heme. It transfers electrons from the [2Fe-2S] iron-sulfur cluster of the Rieske protein to cytochrome c. This chain is Cytochrome c1, heme protein, mitochondrial (cyt-1), found in Neurospora crassa (strain ATCC 24698 / 74-OR23-1A / CBS 708.71 / DSM 1257 / FGSC 987).